The primary structure comprises 159 residues: Small ribosomal subunit protein uS5c (159 aa).

The region spanning 17-80 (WEERVVSVQR…TDGKKNVITV (64 aa)) is the S5 DRBM domain.

It belongs to the universal ribosomal protein uS5 family. In terms of assembly, part of the 30S ribosomal subunit. Contacts protein S4.

The protein localises to the plastid. Its subcellular location is the chloroplast. With S4 and S12 plays an important role in translational accuracy. The polypeptide is Small ribosomal subunit protein uS5c (rps5) (Emiliania huxleyi (Coccolithophore)).